We begin with the raw amino-acid sequence, 156 residues long: Cytochrome c-type biogenesis protein CcmE 2 (156 aa).

The Cytoplasmic segment spans residues 1–8; that stretch reads MNPQRRRR. A helical; Signal-anchor for type II membrane protein membrane pass occupies residues 9-29; it reads LWWVLALLLAGGLATTLVSMA. Topologically, residues 30–156 are periplasmic; sequence LQRNVAYLYT…AAANQGGALR (127 aa). 2 residues coordinate heme: His-123 and Tyr-127. The interval 135–156 is disordered; the sequence is KMGSAHRKHDVPAAANQGGALR.

This sequence belongs to the CcmE/CycJ family.

Its subcellular location is the cell inner membrane. Heme chaperone required for the biogenesis of c-type cytochromes. Transiently binds heme delivered by CcmC and transfers the heme to apo-cytochromes in a process facilitated by CcmF and CcmH. This chain is Cytochrome c-type biogenesis protein CcmE 2, found in Xanthomonas oryzae pv. oryzae (strain MAFF 311018).